The chain runs to 330 residues: ADP-L-glycero-D-manno-heptose-6-epimerase (330 aa).

Residues 11–12, 32–33, lysine 39, lysine 54, 75–79, and asparagine 92 contribute to the NADP(+) site; these read FI, DN, and EGACS. Tyrosine 139 acts as the Proton acceptor in catalysis. Position 143 (lysine 143) interacts with NADP(+). Asparagine 168 is a binding site for substrate. NADP(+)-binding residues include valine 169 and lysine 177. Lysine 177 functions as the Proton acceptor in the catalytic mechanism. Substrate is bound by residues arginine 179, histidine 186, 200-203, arginine 213, and tyrosine 292; that span reads FGEY.

It belongs to the NAD(P)-dependent epimerase/dehydratase family. HldD subfamily. Homopentamer. Requires NADP(+) as cofactor.

The catalysed reaction is ADP-D-glycero-beta-D-manno-heptose = ADP-L-glycero-beta-D-manno-heptose. It functions in the pathway nucleotide-sugar biosynthesis; ADP-L-glycero-beta-D-manno-heptose biosynthesis; ADP-L-glycero-beta-D-manno-heptose from D-glycero-beta-D-manno-heptose 7-phosphate: step 4/4. In terms of biological role, catalyzes the interconversion between ADP-D-glycero-beta-D-manno-heptose and ADP-L-glycero-beta-D-manno-heptose via an epimerization at carbon 6 of the heptose. This chain is ADP-L-glycero-D-manno-heptose-6-epimerase, found in Paraburkholderia phytofirmans (strain DSM 17436 / LMG 22146 / PsJN) (Burkholderia phytofirmans).